Here is a 418-residue protein sequence, read N- to C-terminus: Inward rectifier potassium channel 16 (418 aa).

Residues 1–67 (MSYYGSSYHI…VVDIFTTLVD (67 aa)) are Cytoplasmic-facing. A helical membrane pass occupies residues 68-94 (TKWRHMFVIFSLSYILSWLIFGSVFWL). Residues 95-117 (IAFHHGDLLNDPDITPCVDNVHS) lie on the Extracellular side of the membrane. An intramembrane region (helical; Pore-forming) is located at residues 118 to 134 (FTGAFLFSLETQTTIGY). A Selectivity filter motif is present at residues 131–136 (TIGYGY). The Extracellular portion of the chain corresponds to 135-143 (GYRCVTEEC). A helical transmembrane segment spans residues 144-171 (SVAVLMVILQSILSCIINTFIIGAALAK). Residues 172 to 418 (MATARKRAQT…LNRISVESQM (247 aa)) are Cytoplasmic-facing. Phosphoserine occurs at positions 373 and 375.

This sequence belongs to the inward rectifier-type potassium channel (TC 1.A.2.1) family. KCNJ16 subfamily. In terms of assembly, it forms heteromeric channels with Kir4.1/KCNJ10; this interaction is required for KCNJ16 localization to the basolateral membrane in kidney cells. As a heteromer with KCNJ10, may interact with MAGI1; this interaction may facilitate KCNJ10/KCNJ16 potassium channel expression at the basolateral membrane in kidney cells. May form heteromers with Kir2.1/KCNJ2. Can form heteromeric channels with Kir4.2/KCNJ15. In terms of tissue distribution, widely expressed, with highest levels in adult and fetal kidney (at protein level). In the kidney, expressed in the proximal and distal convoluted tubules, but not in glomeruli nor collecting ducts.

It localises to the membrane. The protein resides in the basolateral cell membrane. It carries out the reaction K(+)(in) = K(+)(out). Its activity is regulated as follows. Channel activity is strongly regulated by variations of cytosolic pH; channels are activated by alkaline and inhibited by acidic pH values. Activated by phosphatidylinositol 4,5 biphosphate (PtdIns(4,5)P2). Inward rectifier potassium channels are characterized by a greater tendency to allow potassium to flow into the cell rather than out of it. Their voltage dependence is regulated by the concentration of extracellular potassium; as external potassium is raised, the voltage range of the channel opening shifts to more positive voltages. The inward rectification is mainly due to the blockage of outward current by internal magnesium. KCNJ16 may be involved in the regulation of fluid and pH balance. In the kidney, together with KCNJ10, mediates basolateral K(+) recycling in distal tubules; this process is critical for Na(+) reabsorption at the tubules. This chain is Inward rectifier potassium channel 16 (KCNJ16), found in Homo sapiens (Human).